A 397-amino-acid polypeptide reads, in one-letter code: Acetyl-CoA acetyltransferase, cytosolic (397 aa).

N-acetylmethionine is present on Met1. Cys92 serves as the catalytic Acyl-thioester intermediate. Residue Lys200 is modified to N6-acetyllysine. CoA is bound by residues Arg223 and Ser226. N6-acetyllysine occurs at positions 233 and 235. Ser252 lines the CoA pocket. Cys383 acts as the Proton donor/acceptor in catalysis.

This sequence belongs to the thiolase-like superfamily. Thiolase family. Homotetramer.

It is found in the cytoplasm. It localises to the cytosol. The catalysed reaction is 2 acetyl-CoA = acetoacetyl-CoA + CoA. The protein operates within lipid metabolism; fatty acid metabolism. Its function is as follows. Involved in the biosynthetic pathway of cholesterol. This chain is Acetyl-CoA acetyltransferase, cytosolic (Acat2), found in Mus musculus (Mouse).